We begin with the raw amino-acid sequence, 132 residues long: Large ribosomal subunit protein uL14 (132 aa).

Belongs to the universal ribosomal protein uL14 family. In terms of assembly, part of the 50S ribosomal subunit. Forms a cluster with proteins L3 and L24e, part of which may contact the 16S rRNA in 2 intersubunit bridges.

Functionally, binds to 23S rRNA. Forms part of two intersubunit bridges in the 70S ribosome. This chain is Large ribosomal subunit protein uL14, found in Methanocaldococcus jannaschii (strain ATCC 43067 / DSM 2661 / JAL-1 / JCM 10045 / NBRC 100440) (Methanococcus jannaschii).